A 355-amino-acid polypeptide reads, in one-letter code: Serum paraoxonase/arylesterase 1 (355 aa).

The cysteines at positions 42 and 353 are disulfide-linked. Ca(2+) is bound by residues Glu-53 and Asp-54. The Proton acceptor role is filled by His-115. Residues Ile-117, Asn-168, Asp-169, and Asn-224 each coordinate Ca(2+). N-linked (GlcNAc...) asparagine glycosylation occurs at Asn-253. Ca(2+) is bound by residues Asp-269 and Asn-270. Asn-270 and Asn-324 each carry an N-linked (GlcNAc...) asparagine glycan.

The protein belongs to the paraoxonase family. Homodimer. Heterooligomer with phosphate-binding protein (HPBP). Interacts with CLU. It depends on Ca(2+) as a cofactor. In terms of processing, glycosylated. Post-translationally, the signal sequence is not cleaved. Present in two forms, form B contains a disulfide bond, form A does not. As to expression, plasma, associated with HDL (at protein level). Expressed in liver, but not in heart, brain, placenta, lung, skeletal muscle, kidney or pancreas.

It is found in the secreted. The protein localises to the extracellular space. The catalysed reaction is a phenyl acetate + H2O = a phenol + acetate + H(+). It carries out the reaction An aryl dialkyl phosphate + H2O = dialkyl phosphate + an aryl alcohol.. It catalyses the reaction an N-acyl-L-homoserine lactone + H2O = an N-acyl-L-homoserine + H(+). Its function is as follows. Hydrolyzes the toxic metabolites of a variety of organophosphorus insecticides. Capable of hydrolyzing a broad spectrum of organophosphate substrates and lactones, and a number of aromatic carboxylic acid esters. Mediates an enzymatic protection of low density lipoproteins against oxidative modification and the consequent series of events leading to atheroma formation. The protein is Serum paraoxonase/arylesterase 1 (PON1) of Homo sapiens (Human).